We begin with the raw amino-acid sequence, 345 residues long: GTPase Obg (345 aa).

Residues 1-158 enclose the Obg domain; it reads MFIDSVKITL…RLVRLELKLI (158 aa). Residues 159 to 339 enclose the OBG-type G domain; it reads ADVGLVGFPN…LKFMLLEEIK (181 aa). GTP-binding positions include 165 to 172, 190 to 194, 212 to 215, 280 to 283, and 320 to 322; these read GFPNVGKS, FTTLT, DIPG, SKSD, and SSL. The Mg(2+) site is built by Ser-172 and Thr-192.

This sequence belongs to the TRAFAC class OBG-HflX-like GTPase superfamily. OBG GTPase family. Monomer. It depends on Mg(2+) as a cofactor.

It localises to the cytoplasm. Its function is as follows. An essential GTPase which binds GTP, GDP and possibly (p)ppGpp with moderate affinity, with high nucleotide exchange rates and a fairly low GTP hydrolysis rate. Plays a role in control of the cell cycle, stress response, ribosome biogenesis and in those bacteria that undergo differentiation, in morphogenesis control. The sequence is that of GTPase Obg from Campylobacter jejuni subsp. jejuni serotype O:6 (strain 81116 / NCTC 11828).